The chain runs to 264 residues: 5'-nucleotidase SurE (264 aa).

A divalent metal cation-binding residues include aspartate 10, aspartate 11, serine 43, and asparagine 99.

Belongs to the SurE nucleotidase family. The cofactor is a divalent metal cation.

Its subcellular location is the cytoplasm. It carries out the reaction a ribonucleoside 5'-phosphate + H2O = a ribonucleoside + phosphate. In terms of biological role, nucleotidase that shows phosphatase activity on nucleoside 5'-monophosphates. In Methanococcus maripaludis (strain C7 / ATCC BAA-1331), this protein is 5'-nucleotidase SurE.